A 1256-amino-acid chain; its full sequence is Bifunctional autolysin (1256 aa).

An N-terminal signal peptide occupies residues 1-29; sequence MAKKFNYKLPSMVALTLVGSAVTAHQVQA. The span at 103–138 shows a compositional bias: polar residues; that stretch reads GDTRANQSATTNNTQPVAKSTSTTAPKTNTNVTNAG. 3 disordered regions span residues 103–151, 172–214, and 419–440; these read GDTR…NSEN, KTAA…KTSL, and TQSTTTPTTPSKPTTPSKPSTG. 2 stretches are compositionally biased toward low complexity: residues 172–196 and 421–439; these read KTAAPKAATTSAPKAKTEATPKVTT and STTTPTTPSKPTTPSKPST. Positions 199-775 are N-acetylmuramoyl-L-alanine amidase; that stretch reads ASAQPRSVAA…AVAQPKTAVK (577 aa). GW domains lie at 443 to 517, 519 to 593, 612 to 686, 688 to 762, 784 to 859, 861 to 936, and 943 to 1017; these read TVAA…YNTA, SPVN…DTAK, TVSS…YNNA, SPVN…VPAA, TTQT…VQNL, KEVK…APTA, and AAKD…KELI. An endo-beta-N-acetylglucosaminidase region spans residues 776–1256; that stretch reads AYTVTKPQTT…GKYFDIPQYK (481 aa).

The protein in the N-terminal section; belongs to the N-acetylmuramoyl-L-alanine amidase 2 family. This sequence in the C-terminal section; belongs to the glycosyl hydrolase 73 family. Oligomer; forms a ring structure at the cell surface which is important for efficient partitioning of daughter cells after cell division. Post-translationally, undergoes proteolytic processing to generate the two extracellular lytic enzymes, probably at the septal region on the cell surface.

The protein resides in the secreted. The catalysed reaction is Hydrolyzes the link between N-acetylmuramoyl residues and L-amino acid residues in certain cell-wall glycopeptides.. It carries out the reaction an N(4)-(oligosaccharide-(1-&gt;3)-[oligosaccharide-(1-&gt;6)]-beta-D-Man-(1-&gt;4)-beta-D-GlcNAc-(1-&gt;4)-alpha-D-GlcNAc)-L-asparaginyl-[protein] + H2O = an oligosaccharide-(1-&gt;3)-[oligosaccharide-(1-&gt;6)]-beta-D-Man-(1-&gt;4)-D-GlcNAc + N(4)-(N-acetyl-beta-D-glucosaminyl)-L-asparaginyl-[protein]. Its function is as follows. Endohydrolysis of the di-N-acetylchitobiosyl unit in high-mannose glycopeptides and glycoproteins containing the -[(Man)5(GlcNAc)2]-Asn structure. One N-acetyl-D-glucosamine residue remains attached to the protein; the rest of the oligosaccharide is released intact. Cleaves the peptidoglycan connecting the daughter cells at the end of the cell division cycle, resulting in the separation of the two newly divided cells. Acts as an autolysin in penicillin-induced lysis. The protein is Bifunctional autolysin (atl) of Staphylococcus aureus (strain NCTC 8325 / PS 47).